The following is a 106-amino-acid chain: Large ribosomal subunit protein uL24 (106 aa).

The protein belongs to the universal ribosomal protein uL24 family. Part of the 50S ribosomal subunit.

One of two assembly initiator proteins, it binds directly to the 5'-end of the 23S rRNA, where it nucleates assembly of the 50S subunit. In terms of biological role, one of the proteins that surrounds the polypeptide exit tunnel on the outside of the subunit. The polypeptide is Large ribosomal subunit protein uL24 (Blochmanniella pennsylvanica (strain BPEN)).